The sequence spans 272 residues: Phosphoglycolate phosphatase 1 (272 aa).

Asp-19 functions as the Nucleophile in the catalytic mechanism. Residues Asp-19, Asp-21, and Asp-182 each contribute to the Mg(2+) site.

The protein belongs to the HAD-like hydrolase superfamily. CbbY/CbbZ/Gph/YieH family. Mg(2+) serves as cofactor.

It catalyses the reaction 2-phosphoglycolate + H2O = glycolate + phosphate. It functions in the pathway organic acid metabolism; glycolate biosynthesis; glycolate from 2-phosphoglycolate: step 1/1. Functionally, specifically catalyzes the dephosphorylation of 2-phosphoglycolate. Is involved in the dissimilation of the intracellular 2-phosphoglycolate formed during the DNA repair of 3'-phosphoglycolate ends, a major class of DNA lesions induced by oxidative stress. The protein is Phosphoglycolate phosphatase 1 of Pseudomonas aeruginosa (strain ATCC 15692 / DSM 22644 / CIP 104116 / JCM 14847 / LMG 12228 / 1C / PRS 101 / PAO1).